Here is a 140-residue protein sequence, read N- to C-terminus: Nucleoside diphosphate kinase (140 aa).

The ATP site is built by K11, F59, R87, T93, R104, and N114. H117 serves as the catalytic Pros-phosphohistidine intermediate.

The protein belongs to the NDK family. As to quaternary structure, homotetramer. Mg(2+) is required as a cofactor.

Its subcellular location is the cytoplasm. The catalysed reaction is a 2'-deoxyribonucleoside 5'-diphosphate + ATP = a 2'-deoxyribonucleoside 5'-triphosphate + ADP. The enzyme catalyses a ribonucleoside 5'-diphosphate + ATP = a ribonucleoside 5'-triphosphate + ADP. In terms of biological role, major role in the synthesis of nucleoside triphosphates other than ATP. The ATP gamma phosphate is transferred to the NDP beta phosphate via a ping-pong mechanism, using a phosphorylated active-site intermediate. The polypeptide is Nucleoside diphosphate kinase (Methylorubrum populi (strain ATCC BAA-705 / NCIMB 13946 / BJ001) (Methylobacterium populi)).